A 107-amino-acid polypeptide reads, in one-letter code: Flagellar hook-basal body complex protein FliE (107 aa).

It belongs to the FliE family.

The protein resides in the bacterial flagellum basal body. This chain is Flagellar hook-basal body complex protein FliE, found in Sodalis glossinidius (strain morsitans).